We begin with the raw amino-acid sequence, 348 residues long: Caricain (348 aa).

A signal peptide spans 1 to 16 (MAMIPSISKLLFVAIC). The propeptide at 17–132 (LFVHMSVSFG…EEFINEDTVN (116 aa)) is activation peptide. Asparagine 86 carries an N-linked (GlcNAc...) asparagine glycan. 3 disulfides stabilise this stretch: cysteine 154-cysteine 195, cysteine 188-cysteine 227, and cysteine 285-cysteine 336. The active site involves cysteine 157. Cysteine 157 is an E64 binding site. Residues histidine 291 and asparagine 311 contribute to the active site.

Belongs to the peptidase C1 family. As to quaternary structure, monomer.

The catalysed reaction is Hydrolysis of proteins with broad specificity for peptide bonds, similar to those of papain and chymopapain.. Repressed by the active-site-directed cysteine protease inhibitor E64 (L-trans-epoxysuccinyl-leucylamide-(4-guanido)-butane) produced by Aspergillus japonicus. In terms of biological role, cysteine proteinase with a high level of diversity in substrate specificity. The polypeptide is Caricain (Carica papaya (Papaya)).